The sequence spans 164 residues: Transcription elongation factor GreA (164 aa).

The stretch at 11–76 (EESYDRLKAE…LQELLNNAKV (66 aa)) forms a coiled coil.

Belongs to the GreA/GreB family.

In terms of biological role, necessary for efficient RNA polymerase transcription elongation past template-encoded arresting sites. The arresting sites in DNA have the property of trapping a certain fraction of elongating RNA polymerases that pass through, resulting in locked ternary complexes. Cleavage of the nascent transcript by cleavage factors such as GreA or GreB allows the resumption of elongation from the new 3'terminus. GreA releases sequences of 2 to 3 nucleotides. The chain is Transcription elongation factor GreA from Mycolicibacterium vanbaalenii (strain DSM 7251 / JCM 13017 / BCRC 16820 / KCTC 9966 / NRRL B-24157 / PYR-1) (Mycobacterium vanbaalenii).